We begin with the raw amino-acid sequence, 109 residues long: UPF0122 protein CLH_1195 (109 aa).

This sequence belongs to the UPF0122 family.

Might take part in the signal recognition particle (SRP) pathway. This is inferred from the conservation of its genetic proximity to ftsY/ffh. May be a regulatory protein. This chain is UPF0122 protein CLH_1195, found in Clostridium botulinum (strain Alaska E43 / Type E3).